A 94-amino-acid polypeptide reads, in one-letter code: MTDETLRLTARITGVVQGVGFRYWTARKADELLLKGTVRNSADGSVELVAEGSAADVDSIVKWLHSSRAPGRVENVDFQVSDATGEFDDFRIID.

The region spanning 7–94 (RLTARITGVV…GEFDDFRIID (88 aa)) is the Acylphosphatase-like domain. Catalysis depends on residues R22 and N40.

It belongs to the acylphosphatase family.

It catalyses the reaction an acyl phosphate + H2O = a carboxylate + phosphate + H(+). The protein is Acylphosphatase (acyP) of Paenarthrobacter aurescens (strain TC1).